The chain runs to 682 residues: Homeobox-leucine zipper protein HDG7 (682 aa).

The interval 33 to 65 is disordered; that stretch reads LSDDSFDAMSGDEDKQEQRPKKKKRKTKYHRHT. Basic residues predominate over residues 52–65; that stretch reads PKKKKRKTKYHRHT. Positions 57–116 form a DNA-binding region, homeobox; sequence RKTKYHRHTSYQIQELESFFKECPHPNEKQRLELGKKLTLESKQIKFWFQNRRTQMKTQL. A coiled-coil region spans residues 105–186; sequence FQNRRTQMKT…LDRICALANR (82 aa). In terms of domain architecture, START spans 214–429; that stretch reads SGGTSLMFMD…LQRQCESFTM (216 aa).

This sequence belongs to the HD-ZIP homeobox family. Class IV subfamily. In terms of assembly, interacts with AIL7/PLT7. In terms of tissue distribution, expressed in cells around the base of leaf primordia, in the outermost 2 to 3 cell layers along the boundary between two leaf primordia. Expressed in lateral root primordia and tips, and in the epidermal boundaries of two cotyledons at heart-stage embryo.

It localises to the nucleus. In terms of biological role, probable transcription factor that binds to the DNA sequence 5'-GCATTAAATGC-3'. Seems to promote cell differentiation. The chain is Homeobox-leucine zipper protein HDG7 from Arabidopsis thaliana (Mouse-ear cress).